Here is a 395-residue protein sequence, read N- to C-terminus: Elongation factor Tu (395 aa).

Residues 10–204 form the tr-type G domain; it reads KPHVNIGTIG…TVDSYIPEPK (195 aa). Residues 19-26 are G1; it reads GHVDHGKT. 19-26 is a binding site for GTP; that stretch reads GHVDHGKT. Thr-26 provides a ligand contact to Mg(2+). Residues 60 to 64 form a G2 region; sequence GITIN. Residues 81 to 84 are G3; it reads DAPG. Residues 81–85 and 136–139 contribute to the GTP site; these read DAPGH and NKTD. Positions 136–139 are G4; sequence NKTD. The segment at 174–176 is G5; the sequence is SAL.

Belongs to the TRAFAC class translation factor GTPase superfamily. Classic translation factor GTPase family. EF-Tu/EF-1A subfamily. Monomer.

Its subcellular location is the cytoplasm. It catalyses the reaction GTP + H2O = GDP + phosphate + H(+). Functionally, GTP hydrolase that promotes the GTP-dependent binding of aminoacyl-tRNA to the A-site of ribosomes during protein biosynthesis. This chain is Elongation factor Tu, found in Leuconostoc citreum (strain KM20).